We begin with the raw amino-acid sequence, 474 residues long: Citrate synthase 4, mitochondrial (474 aa).

The N-terminal 16 residues, Met1–Arg16, are a transit peptide targeting the mitochondrion. Active-site residues include His308, His354, and Asp409.

It belongs to the citrate synthase family. Homodimer.

It localises to the mitochondrion matrix. The catalysed reaction is oxaloacetate + acetyl-CoA + H2O = citrate + CoA + H(+). It participates in carbohydrate metabolism; tricarboxylic acid cycle; isocitrate from oxaloacetate: step 1/2. The polypeptide is Citrate synthase 4, mitochondrial (CSY4) (Arabidopsis thaliana (Mouse-ear cress)).